Reading from the N-terminus, the 289-residue chain is 2-hydroxy-6-oxononadienedioate/2-hydroxy-6-oxononatrienedioate hydrolase 1 (289 aa).

Positions T39–H275 constitute an AB hydrolase-1 domain. Catalysis depends on H269, which acts as the Proton acceptor.

It belongs to the AB hydrolase superfamily. MhpC family. Homodimer.

It catalyses the reaction (2Z,4E)-2-hydroxy-6-oxonona-2,4-dienedioate + H2O = (2Z)-2-hydroxypenta-2,4-dienoate + succinate + H(+). The enzyme catalyses (2Z,4E,7E)-2-hydroxy-6-oxonona-2,4,7-trienedioate + H2O = (2Z)-2-hydroxypenta-2,4-dienoate + fumarate + H(+). It functions in the pathway aromatic compound metabolism; 3-phenylpropanoate degradation. Functionally, catalyzes the cleavage of the C5-C6 bond of 2-hydroxy-6-oxononadienedioate and 2-hydroxy-6-oxononatrienedioate, a dienol ring fission product of the bacterial meta-cleavage pathway for degradation of phenylpropionic acid. The chain is 2-hydroxy-6-oxononadienedioate/2-hydroxy-6-oxononatrienedioate hydrolase 1 from Dechloromonas aromatica (strain RCB).